The chain runs to 519 residues: DNA-directed RNA polymerase subunit Rpo2N (519 aa).

Belongs to the RNA polymerase beta chain family. Part of the RNA polymerase complex.

The protein resides in the cytoplasm. It carries out the reaction RNA(n) + a ribonucleoside 5'-triphosphate = RNA(n+1) + diphosphate. In terms of biological role, DNA-dependent RNA polymerase (RNAP) catalyzes the transcription of DNA into RNA using the four ribonucleoside triphosphates as substrates. The Rpo2 subunit (Rpo2N and Rpo2C in this organism) is implicated in DNA promoter recognition and in nucleotide binding. The chain is DNA-directed RNA polymerase subunit Rpo2N from Methanothermobacter thermautotrophicus (strain ATCC 29096 / DSM 1053 / JCM 10044 / NBRC 100330 / Delta H) (Methanobacterium thermoautotrophicum).